A 215-amino-acid chain; its full sequence is L-fuculose phosphate aldolase (215 aa).

Substrate contacts are provided by residues G28 to N29, T43 to G44, and S71 to S72. E73 functions as the Proton donor/acceptor in the catalytic mechanism. Zn(2+)-binding residues include E73, H92, H94, and H155.

It belongs to the aldolase class II family. AraD/FucA subfamily. As to quaternary structure, homotetramer. Requires Zn(2+) as cofactor.

It carries out the reaction L-fuculose 1-phosphate = (S)-lactaldehyde + dihydroxyacetone phosphate. It functions in the pathway carbohydrate degradation; L-fucose degradation; L-lactaldehyde and glycerone phosphate from L-fucose: step 3/3. With respect to regulation, inhibited by phosphoglycolohydroxamate (PGH). Its function is as follows. Involved in the degradation of L-fucose and D-arabinose. Catalyzes the reversible cleavage of L-fuculose 1-phosphate (Fuc1P) to yield dihydroxyacetone phosphate (DHAP) and L-lactaldehyde. Also able to catalyze the reversible cleavage of D-ribulose 1-phosphate, but FucA has a higher affinity for L-fuculose 1-phosphate and L-lactaldehyde than for D-ribulose 1-phosphate and glycolaldehyde, respectively. FucA possesses a high specificity for the dihydroxyacetone phosphate (DHAP), but accepts a great variety of different aldehydes and has a strong preference for L-configurated alpha-hydroxy aldehydes. FucA generates a vicinal diol unit having the absolute (3R,4R)-cis configuration (D-erythro). The polypeptide is L-fuculose phosphate aldolase (Escherichia coli (strain K12)).